Here is a 182-residue protein sequence, read N- to C-terminus: Triplatin (182 aa).

Residues 1 to 18 form the signal peptide; the sequence is MKMIIAVTFLGIVTIAFA. 3 disulfides stabilise this stretch: Cys21-Cys133, Cys55-Cys177, and Cys88-Cys105.

This sequence belongs to the calycin superfamily. Triabin family. In terms of tissue distribution, expressed in salivary glands.

Its subcellular location is the secreted. Its function is as follows. Inhibits platelet aggregation and vasoconstriction through binding to distinct eicosanoids involved in inflammation (acts as a scavenger), and has a role in inhibiting host innate immunity by impairing platelet-assisted formation of neutrophil extracellular traps (NETs). Inhibits platelet aggregation by collagen, and low doses of thromboxane A2 mimetic (TXA2 mimetic), and arachidonic acid (AA) without affecting aggregation induced by ADP, convulxin (GP6 agonist), and PMA. Binds to TXA2, TXB2, prostaglandine H2 mimetic (PGH2 mimetic), PGJ2, and PGF2alpha. Binding is not observed to leukotrienes, AA, and biogenic amines (PGE1, 5(S)-HETE, 12(S)-HETE, 20-HETE, norepinephrine, epinephrine, serotonin, LTC4 and ADP). Induces relaxation of aorta rat previously contracted with TXA2 mimetic. Moreover, it also impairs platelet-assisted formation of neutrophil extracellular traps (NETs). NETs are web-like structures of DNA and proteins that play an important role in killing of pathogens. In addition, NETs are implicated in thrombus formation. In vivo, this protein exhibits antithrombotic activity in two distinct mice models that are highly dependent on platelets. It is noteworthy that it inhibits thrombosis without promoting excessive bleeding. The polypeptide is Triplatin (Triatoma infestans (Assassin bug)).